We begin with the raw amino-acid sequence, 315 residues long: Aspartate carbamoyltransferase catalytic subunit (315 aa).

Residues Arg64 and Thr65 each contribute to the carbamoyl phosphate site. Lys92 contributes to the L-aspartate binding site. Arg114, His142, and Gln145 together coordinate carbamoyl phosphate. L-aspartate-binding residues include Arg176 and Arg230. Residues Gly271 and Pro272 each coordinate carbamoyl phosphate.

This sequence belongs to the aspartate/ornithine carbamoyltransferase superfamily. ATCase family. In terms of assembly, heterododecamer (2C3:3R2) of six catalytic PyrB chains organized as two trimers (C3), and six regulatory PyrI chains organized as three dimers (R2).

It carries out the reaction carbamoyl phosphate + L-aspartate = N-carbamoyl-L-aspartate + phosphate + H(+). The protein operates within pyrimidine metabolism; UMP biosynthesis via de novo pathway; (S)-dihydroorotate from bicarbonate: step 2/3. Catalyzes the condensation of carbamoyl phosphate and aspartate to form carbamoyl aspartate and inorganic phosphate, the committed step in the de novo pyrimidine nucleotide biosynthesis pathway. The polypeptide is Aspartate carbamoyltransferase catalytic subunit (Lawsonia intracellularis (strain PHE/MN1-00)).